We begin with the raw amino-acid sequence, 473 residues long: Serine palmitoyltransferase 1 (473 aa).

Residues 1–15 are Lumenal-facing; sequence MATVAEQWVLVEMVQ. An interaction with SPTLC2 region spans residues 1 to 66; sequence MATVAEQWVL…KEELIEEWQP (66 aa). The helical transmembrane segment at 16 to 36 threads the bilayer; the sequence is ALYEAPAYHLILEGILILWII. The Cytoplasmic segment spans residues 37-473; sequence RLLFSKTYKL…ISEVAQTVLL (437 aa). Tyrosine 164 bears the Phosphotyrosine; by ABL mark.

Belongs to the class-II pyridoxal-phosphate-dependent aminotransferase family. Component of the serine palmitoyltransferase (SPT) complex, which is also composed of SPTLC2 or SPTLC3 and SPTSSA or SPTSSB. The heterodimer with SPTLC2 or SPTLC3 forms the catalytic core of the enzyme, while SPTSSA or SPTSSB subunits determine substrate specificity. SPT also interacts with ORMDL proteins, especially ORMDL3, which negatively regulate SPT activity in the presence of ceramides. Forms dimers of heterodimers with SPTLC2. Interacts with RTN4. It depends on pyridoxal 5'-phosphate as a cofactor. Phosphorylation at Tyr-164 inhibits activity and promotes cell survival.

The protein localises to the endoplasmic reticulum membrane. The enzyme catalyses L-serine + hexadecanoyl-CoA + H(+) = 3-oxosphinganine + CO2 + CoA. It carries out the reaction octadecanoyl-CoA + L-serine + H(+) = 3-oxoeicosasphinganine + CO2 + CoA. The catalysed reaction is tetradecanoyl-CoA + L-serine + H(+) = 3-oxohexadecasphinganine + CO2 + CoA. It catalyses the reaction dodecanoyl-CoA + L-serine + H(+) = 3-oxotetradecasphinganine + CO2 + CoA. It participates in lipid metabolism; sphingolipid metabolism. With respect to regulation, SPT complex catalytic activity is negatively regulated by ORMDL proteins, including ORMDL3, in the presence of ceramides. This mechanism allows to maintain ceramide levels at sufficient concentrations for the production of complex sphingolipids, but which prevents the accumulation of ceramides to levels that trigger apoptosis. Functionally, component of the serine palmitoyltransferase multisubunit enzyme (SPT) that catalyzes the initial and rate-limiting step in sphingolipid biosynthesis by condensing L-serine and activated acyl-CoA (most commonly palmitoyl-CoA) to form long-chain bases. The SPT complex is also composed of SPTLC2 or SPTLC3 and SPTSSA or SPTSSB. Within this complex, the heterodimer with SPTLC2 or SPTLC3 forms the catalytic core. The composition of the serine palmitoyltransferase (SPT) complex determines the substrate preference. The SPTLC1-SPTLC2-SPTSSA complex shows a strong preference for C16-CoA substrate, while the SPTLC1-SPTLC3-SPTSSA isozyme uses both C14-CoA and C16-CoA as substrates, with a slight preference for C14-CoA. The SPTLC1-SPTLC2-SPTSSB complex shows a strong preference for C18-CoA substrate, while the SPTLC1-SPTLC3-SPTSSB isozyme displays an ability to use a broader range of acyl-CoAs, without apparent preference. Required for adipocyte cell viability and metabolic homeostasis. The polypeptide is Serine palmitoyltransferase 1 (SPTLC1) (Bos taurus (Bovine)).